The primary structure comprises 330 residues: Transcription factor zip1 (330 aa).

Residues 133 to 148 show a composition bias toward basic and acidic residues; it reads SKETQEKTSSQRELFE. Disordered stretches follow at residues 133–165 and 238–277; these read SKET…SSSS and PSLS…NTAA. Over residues 150–165 the composition is skewed to low complexity; that stretch reads KSSVASASKDNVSSSS. Over residues 244 to 262 the composition is skewed to polar residues; the sequence is KGAQSPNANSKRTKATSAI. In terms of domain architecture, bZIP spans 264–327; sequence TAAEEDKRRR…NWLKGLIRPT (64 aa). The tract at residues 270 to 288 is basic motif; sequence KRRRNTAASARFRIKKKLK. Positions 292–320 are leucine-zipper; sequence LERTAKELTEKVAILETRVRELEMENNWL.

This sequence belongs to the bZIP family. Interacts with pof1.

The protein localises to the nucleus. In terms of biological role, mediates cell growth arrest in response to cadmium exposure, which is essential to maintain cell viability. Regulates cadmium stress specific genes. This chain is Transcription factor zip1 (zip1), found in Schizosaccharomyces pombe (strain 972 / ATCC 24843) (Fission yeast).